Here is a 503-residue protein sequence, read N- to C-terminus: Lanosterol 14-alpha demethylase (503 aa).

The chain crosses the membrane as a helical span at residues 24–44 (GNLLSTLLIACAFTLSLVYLF). Cysteine 449 lines the heme pocket.

Belongs to the cytochrome P450 family. It depends on heme as a cofactor. In terms of processing, ubiquitinated by MARCHF6, leading to proteasomal degradation.

Its subcellular location is the endoplasmic reticulum membrane. The protein localises to the microsome membrane. The catalysed reaction is a 14alpha-methyl steroid + 3 reduced [NADPH--hemoprotein reductase] + 3 O2 = a Delta(14) steroid + formate + 3 oxidized [NADPH--hemoprotein reductase] + 4 H2O + 4 H(+). It carries out the reaction lanosterol + 3 reduced [NADPH--hemoprotein reductase] + 3 O2 = 4,4-dimethyl-5alpha-cholesta-8,14,24-trien-3beta-ol + formate + 3 oxidized [NADPH--hemoprotein reductase] + 4 H2O + 4 H(+). It catalyses the reaction 24,25-dihydrolanosterol + 3 reduced [NADPH--hemoprotein reductase] + 3 O2 = 4,4-dimethyl-8,14-cholestadien-3beta-ol + formate + 3 oxidized [NADPH--hemoprotein reductase] + 4 H2O + 4 H(+). The enzyme catalyses a 14alpha-methyl steroid + reduced [NADPH--hemoprotein reductase] + O2 = a 14alpha-hydroxymethyl steroid + oxidized [NADPH--hemoprotein reductase] + H2O + H(+). The catalysed reaction is a 14alpha-hydroxymethyl steroid + reduced [NADPH--hemoprotein reductase] + O2 = a 14alpha-formyl steroid + oxidized [NADPH--hemoprotein reductase] + 2 H2O + H(+). It carries out the reaction a 14alpha-formyl steroid + reduced [NADPH--hemoprotein reductase] + O2 = a Delta(14) steroid + formate + oxidized [NADPH--hemoprotein reductase] + H2O + 2 H(+). It catalyses the reaction lanosterol + reduced [NADPH--hemoprotein reductase] + O2 = 32-hydroxylanosterol + oxidized [NADPH--hemoprotein reductase] + H2O + H(+). The enzyme catalyses 32-hydroxylanosterol + reduced [NADPH--hemoprotein reductase] + O2 = 32-oxolanosterol + oxidized [NADPH--hemoprotein reductase] + 2 H2O + H(+). The catalysed reaction is 32-oxolanosterol + reduced [NADPH--hemoprotein reductase] + O2 = 4,4-dimethyl-5alpha-cholesta-8,14,24-trien-3beta-ol + formate + oxidized [NADPH--hemoprotein reductase] + H2O + 2 H(+). It carries out the reaction 24,25-dihydrolanosterol + reduced [NADPH--hemoprotein reductase] + O2 = 32-hydroxy-24,25-dihydrolanosterol + oxidized [NADPH--hemoprotein reductase] + H2O + H(+). It catalyses the reaction 32-hydroxy-24,25-dihydrolanosterol + reduced [NADPH--hemoprotein reductase] + O2 = 32-oxo-24,25-dihydrolanosterol + oxidized [NADPH--hemoprotein reductase] + 2 H2O + H(+). The enzyme catalyses 32-oxo-24,25-dihydrolanosterol + reduced [NADPH--hemoprotein reductase] + O2 = 4,4-dimethyl-8,14-cholestadien-3beta-ol + formate + oxidized [NADPH--hemoprotein reductase] + H2O + 2 H(+). The protein operates within steroid biosynthesis; zymosterol biosynthesis; zymosterol from lanosterol: step 1/6. With respect to regulation, inhibited by azalanstat. Inhibited by azole antifungal agents ketoconazole, itraconazole and fluconazole. Sterol 14alpha-demethylase that plays a critical role in the cholesterol biosynthesis pathway, being cholesterol the major sterol component in mammalian membranes as well as a precursor for bile acid and steroid hormone synthesis. Cytochrome P450 monooxygenase that catalyzes the three-step oxidative removal of the 14alpha-methyl group (C-32) of sterols such as lanosterol (lanosta-8,24-dien-3beta-ol) and 24,25-dihydrolanosterol (DHL) in the form of formate, and converts the sterols to 4,4-dimethyl-5alpha-cholesta-8,14,24-trien-3beta-ol and 4,4-dimethyl-8,14-cholestadien-3beta-ol, respectively, which are intermediates of cholesterol biosynthesis. Can also demethylate substrates not intrinsic to mammals, such as eburicol (24-methylene-24,25-dihydrolanosterol), but at a lower rate than DHL. The polypeptide is Lanosterol 14-alpha demethylase (Mus musculus (Mouse)).